The chain runs to 444 residues: Maintenance of mitochondrial morphology protein 1 (444 aa).

Positions 1–16 are enriched in polar residues; that stretch reads MKGVENTLSQSESVNR. Positions 1–20 are disordered; it reads MKGVENTLSQSESVNRGYNG. At 1–107 the chain is on the lumenal side; sequence MKGVENTLSQ…TFSSRSFAEG (107 aa). The helical transmembrane segment at 108–128 threads the bilayer; the sequence is LVVGQLSVIVVLIFFIKFFIF. At 129–444 the chain is on the cytoplasmic side; the sequence is SDGPAKTGGG…QEEDPSRAPE (316 aa). The disordered stretch occupies residues 136 to 157; that stretch reads GGGGGSSAESRSSGFTGSPLTS. The span at 142 to 157 shows a compositional bias: low complexity; that stretch reads SAESRSSGFTGSPLTS. Residues 204–418 enclose the SMP-LTD domain; that stretch reads SPESLDWFNV…EPRFQFVKLP (215 aa). Positions 425–444 are disordered; the sequence is KNTREEKSDMQEEDPSRAPE. The span at 426–444 shows a compositional bias: basic and acidic residues; sequence NTREEKSDMQEEDPSRAPE.

It belongs to the MMM1 family. As to quaternary structure, homodimer. Component of the ER-mitochondria encounter structure (ERMES) or MDM complex, composed of MMM1, MDM10, MDM12 and MDM34. An MMM1 homodimer associates with one molecule of MDM12 on each side in a pairwise head-to-tail manner, and the SMP-LTD domains of MMM1 and MDM12 generate a continuous hydrophobic tunnel for phospholipid trafficking.

It localises to the endoplasmic reticulum membrane. Functionally, component of the ERMES/MDM complex, which serves as a molecular tether to connect the endoplasmic reticulum (ER) and mitochondria. Components of this complex are involved in the control of mitochondrial shape and protein biogenesis, and function in nonvesicular lipid trafficking between the ER and mitochondria. The MDM12-MMM1 subcomplex functions in the major beta-barrel assembly pathway that is responsible for biogenesis of all outer membrane beta-barrel proteins, and acts in a late step after the SAM complex. The MDM10-MDM12-MMM1 subcomplex further acts in the TOM40-specific pathway after the action of the MDM12-MMM1 complex. Essential for establishing and maintaining the structure of mitochondria and maintenance of mtDNA nucleoids. In Eremothecium gossypii (strain ATCC 10895 / CBS 109.51 / FGSC 9923 / NRRL Y-1056) (Yeast), this protein is Maintenance of mitochondrial morphology protein 1.